We begin with the raw amino-acid sequence, 361 residues long: Phosphoserine aminotransferase (361 aa).

An L-glutamate-binding site is contributed by Arg-43. Pyridoxal 5'-phosphate contacts are provided by residues 77 to 78, Trp-103, Thr-153, Asp-173, and Gln-196; that span reads AS. At Lys-197 the chain carries N6-(pyridoxal phosphate)lysine. 238-239 serves as a coordination point for pyridoxal 5'-phosphate; it reads NT.

Belongs to the class-V pyridoxal-phosphate-dependent aminotransferase family. SerC subfamily. Homodimer. Pyridoxal 5'-phosphate is required as a cofactor.

The protein resides in the cytoplasm. It carries out the reaction O-phospho-L-serine + 2-oxoglutarate = 3-phosphooxypyruvate + L-glutamate. It catalyses the reaction 4-(phosphooxy)-L-threonine + 2-oxoglutarate = (R)-3-hydroxy-2-oxo-4-phosphooxybutanoate + L-glutamate. The protein operates within amino-acid biosynthesis; L-serine biosynthesis; L-serine from 3-phospho-D-glycerate: step 2/3. Its pathway is cofactor biosynthesis; pyridoxine 5'-phosphate biosynthesis; pyridoxine 5'-phosphate from D-erythrose 4-phosphate: step 3/5. Functionally, catalyzes the reversible conversion of 3-phosphohydroxypyruvate to phosphoserine and of 3-hydroxy-2-oxo-4-phosphonooxybutanoate to phosphohydroxythreonine. The polypeptide is Phosphoserine aminotransferase (Stutzerimonas stutzeri (Pseudomonas stutzeri)).